The following is a 91-amino-acid chain: MSSRSRSRASSAARITDEQIGDLVSKLQALLPEARLRSNDRVPSARVLQETCSYIRSLHREVDDLSERLAELLAAADVSTAQAAVIRGLLM.

Positions 4–58 constitute a bHLH domain; it reads RSRSRASSAARITDEQIGDLVSKLQALLPEARLRSNDRVPSARVLQETCSYIRSL.

The protein belongs to the bHLH protein family.

Atypical and probable non DNA-binding bHLH transcription factor that integrates multiple signaling pathways to regulate cell elongation and plant development. The sequence is that of Transcription factor ILI7 (ILI7) from Oryza sativa subsp. indica (Rice).